The following is a 134-amino-acid chain: Large ribosomal subunit protein uL16c (134 aa).

It belongs to the universal ribosomal protein uL16 family. Part of the 50S ribosomal subunit.

It is found in the plastid. The protein localises to the chloroplast. The polypeptide is Large ribosomal subunit protein uL16c (Guillardia theta (Cryptophyte)).